A 409-amino-acid chain; its full sequence is WW domain-containing oxidoreductase (409 aa).

Residues 1 to 23 (MIALPDTDSEDELPPGWEERATD) are disordered. WW domains are found at residues 11-44 (DELP…HPRT) and 52-86 (GELP…DPRL). 128-134 (GANCGIG) provides a ligand contact to NADP(+). Residue S257 coordinates substrate. Catalysis depends on Y288, which acts as the Proton acceptor.

The protein belongs to the short-chain dehydrogenases/reductases (SDR) family.

It localises to the cytoplasm. The protein localises to the mitochondrion. It is found in the golgi apparatus. The protein resides in the lysosome. Functionally, putative oxidoreductase. May control genotoxic stress-induced cell death. May play a role in TGFB1 signaling and TGFB1-mediated cell death. May also play a role in tumor necrosis factor (TNF)-mediated cell death. May play a role in Wnt signaling. The polypeptide is WW domain-containing oxidoreductase (Wwox) (Drosophila melanogaster (Fruit fly)).